Consider the following 195-residue polypeptide: MTVERLENGVIVQRNTNEIEISITLDTVHGKLEGSTGVNFFDHLLNTFCHYSGLGLRVSTCESKDGILHHLIEDFGISLGLAFRELFDYTKVRRFGEATVPMNEALVGCYVDLSGRPFFQKNFEFSVEKIEDMPVEGFEEFMCGFVNHARITVHFFKFFGKNDHHISESAMKSFGLAIARALEGSEKKTTKGVID.

Belongs to the imidazoleglycerol-phosphate dehydratase family.

The protein resides in the cytoplasm. It carries out the reaction D-erythro-1-(imidazol-4-yl)glycerol 3-phosphate = 3-(imidazol-4-yl)-2-oxopropyl phosphate + H2O. It functions in the pathway amino-acid biosynthesis; L-histidine biosynthesis; L-histidine from 5-phospho-alpha-D-ribose 1-diphosphate: step 6/9. The polypeptide is Imidazoleglycerol-phosphate dehydratase (Thermotoga petrophila (strain ATCC BAA-488 / DSM 13995 / JCM 10881 / RKU-1)).